We begin with the raw amino-acid sequence, 188 residues long: MPKASEIKKGFAIESNGKTLLVKDIEVTTPGGRGGAKIYKMRCTDLNTGARVDERYKSDDVVETVEMNKRAVVYSYADGDEHIFMDNEDYSQYTFKHNEVEDELLFINEDTQGIHLILINGSAVGIELPSSVELVIEETDPSIKGASASARTKPARFASGLVIQVPEYIATGDRVIINTTERKYMSRA.

The protein belongs to the elongation factor P family.

This Vibrio campbellii (strain ATCC BAA-1116) protein is Elongation factor P-like protein.